Consider the following 94-residue polypeptide: Integration host factor subunit beta (94 aa).

It belongs to the bacterial histone-like protein family. In terms of assembly, heterodimer of an alpha and a beta chain.

Its function is as follows. This protein is one of the two subunits of integration host factor, a specific DNA-binding protein that functions in genetic recombination as well as in transcriptional and translational control. The polypeptide is Integration host factor subunit beta (Azoarcus sp. (strain BH72)).